The chain runs to 367 residues: MKEPLDLSKYSIRTDLAVEAHQMLQESQEEQKGIQGVIVKEREEEGTIITKVTIDEAASEAMGKKPGNYLTLEVQGIRQQDTELQQKVERIFAKEFSCFLEEVGVTKEASCLIVGLGNWNVTPDALGPIVVENVLVTRHLFQLQPESVEEGFRPVSAIRPGVMGITGIETSDVIYGIIEKTNPDFVIAIDALAARSIERVNSTIQISDTGIHPGSGVGNKRKELSKDTLGIPVIAIGVPTVVDAVSITSDTIDFILKHFGREMKEGNKPSRSLLPAGFSFGEKKKLTEEDMPDEKSRNMFLGAVGTLEEEEKRRLIYEVLSPLGHNLMVTPKEVDTFIEDMANVIASGLNAALHHQIDQDNTGAYTH.

Positions 1 to 15 (MKEPLDLSKYSIRTD) are excised as a propeptide.

This sequence belongs to the peptidase A25 family. As to quaternary structure, homotetramer. Post-translationally, autoproteolytically processed. The inactive tetrameric zymogen termed p46 autoprocesses to a smaller form termed p41, which is active only during spore germination.

It carries out the reaction Endopeptidase action with P4 Glu or Asp, P1 preferably Glu &gt; Asp, P1' hydrophobic and P2' Ala.. In terms of biological role, initiates the rapid degradation of small, acid-soluble proteins during spore germination. The protein is Germination protease of Bacillus cereus (strain B4264).